We begin with the raw amino-acid sequence, 195 residues long: Interferon tau-6 (195 aa).

The signal sequence occupies residues 1–23 (MAFVLSLLMALVLVSYGPGGSLG). Cystine bridges form between Cys-24–Cys-122 and Cys-52–Cys-162. Residue Asn-101 is glycosylated (N-linked (GlcNAc...) asparagine).

Belongs to the alpha/beta interferon family. IFN-alphaII subfamily. As to expression, constitutively and exclusively expressed in the mononuclear cells of the extraembryonic trophectoderm.

The protein resides in the secreted. Functionally, paracrine hormone primarily responsible for maternal recognition of pregnancy. Interacts with endometrial receptors, probably type I interferon receptors, and blocks estrogen receptor expression, preventing the estrogen-induced increase in oxytocin receptor expression in the endometrium. This results in the suppression of the pulsatile endometrial release of the luteolytic hormone prostaglandin F2-alpha, hindering the regression of the corpus luteum (luteolysis) and therefore a return to ovarian cyclicity. This, and a possible direct effect of IFN-tau on prostaglandin synthesis, leads in turn to continued ovarian progesterone secretion, which stimulates the secretion by the endometrium of the nutrients required for the growth of the conceptus. In summary, displays particularly high antiviral and antiproliferative potency concurrently with particular weak cytotoxicity, high antiluteolytic activity and immunomodulatory properties. In contrast with other IFNs, IFN-tau is not virally inducible. The chain is Interferon tau-6 (IFNT6) from Ovis aries (Sheep).